Consider the following 147-residue polypeptide: Receptor activity-modifying protein 3 (147 aa).

The N-terminal stretch at 1–22 (MATPAQRLHLLPLLLLLCGECA) is a signal peptide. The Extracellular portion of the chain corresponds to 23–112 (QVCGCNETGM…CTVDRTHWED (90 aa)). 4 N-linked (GlcNAc...) asparagine glycosylation sites follow: N28, N57, N70, and N102. 2 cysteine pairs are disulfide-bonded: C39–C71 and C56–C103. A helical transmembrane segment spans residues 113–137 (PPDEVLIPLIAVPVLLTVAMAGLVV). Residues 138–147 (WRSKRTDRLL) are Cytoplasmic-facing.

The protein belongs to the RAMP family. In terms of assembly, heterodimer of CALCRL and RAMP3; interaction induces allosteric modulation of CALCRL function and ligand specificity for adrenomedullin/ADM and intermedin/ADM2. Heterodimer of CALCR and RAMP3; interaction form the receptor complex AMYR3 for amylin/IAPP. Interacts with GPER1.

It localises to the cell membrane. The protein localises to the membrane. Accessory protein that interacts with and modulates the function of G-protein coupled receptors including calcitonin gene-related peptide type 1 receptor (CALCRL), calcitonin receptor (CALCR) and G-protein coupled estrogen receptor 1 (GPER1). Required for the transport of CALCRL and GPER1 receptors to the plasma membrane. Plays a role in cardioprotection by reducing cardiac hypertrophy and perivascular fibrosis in a GPER1-dependent manner. Together with CALCRL, form a receptor complex for adrenomedullin/ADM and intermedin/ADM2. Together with CALCR, act as a receptor complex for amylin/IAPP. The protein is Receptor activity-modifying protein 3 of Rattus norvegicus (Rat).